The primary structure comprises 351 residues: Ion-translocating oxidoreductase complex subunit D (351 aa).

4 consecutive transmembrane segments (helical) span residues 18 to 38 (IMLL…YFFG), 40 to 60 (GSLI…GAVL), 87 to 107 (LPPL…IVIA), and 121 to 141 (PAMV…TSWL). Thr185 carries the post-translational modification FMN phosphoryl threonine. 5 helical membrane-spanning segments follow: residues 211 to 231 (VLAG…GLLL), 241 to 261 (IPVS…MIAP), 264 to 284 (FASP…FFIA), 298 to 318 (LIFG…GGYP), and 320 to 340 (GVAF…HYTQ).

The protein belongs to the NqrB/RnfD family. The complex is composed of six subunits: RnfA, RnfB, RnfC, RnfD, RnfE and RnfG. Requires FMN as cofactor.

It is found in the cell inner membrane. Part of a membrane-bound complex that couples electron transfer with translocation of ions across the membrane. The sequence is that of Ion-translocating oxidoreductase complex subunit D from Yersinia pseudotuberculosis serotype I (strain IP32953).